A 281-amino-acid polypeptide reads, in one-letter code: Cell division protein DivIB (281 aa).

Residues 1–36 (MARKRITRRDPEEELSKFLRHEPGQGQETRKLSSQL) form a disordered region. The Cytoplasmic portion of the chain corresponds to 1–46 (MARKRITRRDPEEELSKFLRHEPGQGQETRKLSSQLTSLKKERRRG). Over residues 8–31 (RRDPEEELSKFLRHEPGQGQETRK) the composition is skewed to basic and acidic residues. A helical membrane pass occupies residues 47–69 (LLTRLGSIMAVCLLAIAFLTYYV). Over 70–281 (SPLADVSTVR…SAEKKAYGLS (212 aa)) the chain is Extracellular. The POTRA domain maps to 73–144 (ADVSTVRVLG…NTLNMQVHER (72 aa)).

This sequence belongs to the FtsQ/DivIB family. DivIB subfamily.

It is found in the cell membrane. Functionally, cell division protein that may be involved in stabilizing or promoting the assembly of the division complex. The sequence is that of Cell division protein DivIB from Lactobacillus delbrueckii subsp. bulgaricus (strain ATCC 11842 / DSM 20081 / BCRC 10696 / JCM 1002 / NBRC 13953 / NCIMB 11778 / NCTC 12712 / WDCM 00102 / Lb 14).